The primary structure comprises 529 residues: Na(+)/H(+) antiporter NhaB (529 aa).

12 helical membrane-spanning segments follow: residues 13–33 (FLGK…IINP), 34–54 (IVFF…EFIF), 90–110 (LVAN…IYFM), 113–133 (LLLF…ILSL), 136–156 (CFAA…AVVI), 205–225 (LLMH…VGEP), 241–261 (FLIR…LTCF), 306–326 (GLIA…VGLI), 327–347 (GLSV…HSLG), 351–371 (EEAL…AVII), 451–471 (ATPN…APLI), and 479–499 (VIMA…GIVF).

It belongs to the NhaB Na(+)/H(+) (TC 2.A.34) antiporter family.

The protein localises to the cell inner membrane. The enzyme catalyses 2 Na(+)(in) + 3 H(+)(out) = 2 Na(+)(out) + 3 H(+)(in). Its function is as follows. Na(+)/H(+) antiporter that extrudes sodium in exchange for external protons. The chain is Na(+)/H(+) antiporter NhaB from Vibrio vulnificus (strain CMCP6).